The primary structure comprises 65 residues: Sec-independent protein translocase protein TatA (65 aa).

The helical transmembrane segment at 1–21 threads the bilayer; that stretch reads MFGLGGQELVLILLIILLLFG.

This sequence belongs to the TatA/E family. Forms a complex with TatC.

It localises to the cell inner membrane. In terms of biological role, part of the twin-arginine translocation (Tat) system that transports large folded proteins containing a characteristic twin-arginine motif in their signal peptide across membranes. TatA could form the protein-conducting channel of the Tat system. The sequence is that of Sec-independent protein translocase protein TatA from Chlorobium phaeobacteroides (strain DSM 266 / SMG 266 / 2430).